Consider the following 303-residue polypeptide: MLIVQQFQKRSFIIPSLISSGLSYLSKDIRLADKMEDGELHFPKTEFEKSQNTSRPLFQRPEPNYPGHVPLYNFEKLLMFLGSSIGAFVNPTNNNFIVSLGESTAFPWVLNRLRTQMLNDPSGRQILKERPHMTSKSLNLDELKNYPDNSLGKSYFLWLEREGVSPDTRVPVKYITDPELAFVFQRYRECHDFYHTITGLPIVREGEIALKLFEFMNLGIPMTGLGALFAPIPIKSSQRRRLLSVYYPWAVKNGTICKPLINVYWEKIMKKDIDVLRSELGIEKPPDMRELRKKARSKKKQVA.

Residues histidine 191, aspartate 192, histidine 195, and glutamate 207 each contribute to the Zn(2+) site.

This sequence belongs to the COQ4 family. As to quaternary structure, component of a multi-subunit COQ enzyme complex, composed of at least COQ3, COQ4, COQ5, COQ6, COQ7 and COQ9. The cofactor is Zn(2+).

The protein resides in the mitochondrion inner membrane. It catalyses the reaction a 4-hydroxy-3-methoxy-5-(all-trans-polyprenyl)benzoate + H(+) = a 2-methoxy-6-(all-trans-polyprenyl)phenol + CO2. Its pathway is cofactor biosynthesis; ubiquinone biosynthesis. Lyase that catalyzes the C1-decarboxylation of 4-hydroxy-3-methoxy-5-(all-trans-polyprenyl)benzoic acid into 2-methoxy-6-(all-trans-polyprenyl)phenol during ubiquinone biosynthesis. The protein is Ubiquinone biosynthesis protein COQ4, mitochondrial of Komagataella phaffii (strain GS115 / ATCC 20864) (Yeast).